Consider the following 435-residue polypeptide: Serine--tRNA ligase (435 aa).

An L-serine-binding site is contributed by 237–239; that stretch reads TAE. 268-270 serves as a coordination point for ATP; sequence RSE. Glutamate 291 is a binding site for L-serine. 355–358 contacts ATP; the sequence is EISS. An L-serine-binding site is contributed by serine 390.

Belongs to the class-II aminoacyl-tRNA synthetase family. Type-1 seryl-tRNA synthetase subfamily. In terms of assembly, homodimer. The tRNA molecule binds across the dimer.

Its subcellular location is the cytoplasm. The enzyme catalyses tRNA(Ser) + L-serine + ATP = L-seryl-tRNA(Ser) + AMP + diphosphate + H(+). The catalysed reaction is tRNA(Sec) + L-serine + ATP = L-seryl-tRNA(Sec) + AMP + diphosphate + H(+). The protein operates within aminoacyl-tRNA biosynthesis; selenocysteinyl-tRNA(Sec) biosynthesis; L-seryl-tRNA(Sec) from L-serine and tRNA(Sec): step 1/1. Its function is as follows. Catalyzes the attachment of serine to tRNA(Ser). Is also able to aminoacylate tRNA(Sec) with serine, to form the misacylated tRNA L-seryl-tRNA(Sec), which will be further converted into selenocysteinyl-tRNA(Sec). This Lactobacillus delbrueckii subsp. bulgaricus (strain ATCC BAA-365 / Lb-18) protein is Serine--tRNA ligase.